The primary structure comprises 793 residues: Serine/threonine-protein kinase CLA4 (793 aa).

Positions 8-27 (RELSESDFQDIGPAPKPPPV) are disordered. A PH domain is found at 56–168 (QRKKSGWVSY…WLDSIFSKCP (113 aa)). The CRIB domain maps to 173–186 (VSSPTNFTHKVHVG). Disordered stretches follow at residues 243-369 (AAAQ…ESPT) and 383-476 (QKQL…RPTM). 3 stretches are compositionally biased toward polar residues: residues 258 to 276 (TLSSNSSQASMQQIASTPP), 312 to 337 (GVTTSPSVHHQNTQHGKQQSPTQSGP), and 355 to 369 (LGNSVSSVATKESPT). The region spanning 498 to 776 (FQMIEKAGQG…TEELLHHSFF (279 aa)) is the Protein kinase domain. ATP-binding positions include 504–512 (AGQGASGSV) and lysine 545. Catalysis depends on aspartate 644, which acts as the Proton acceptor.

Belongs to the protein kinase superfamily. STE Ser/Thr protein kinase family. STE20 subfamily.

The catalysed reaction is L-seryl-[protein] + ATP = O-phospho-L-seryl-[protein] + ADP + H(+). The enzyme catalyses L-threonyl-[protein] + ATP = O-phospho-L-threonyl-[protein] + ADP + H(+). In terms of biological role, required for hyphal maturation and for septation. In Eremothecium gossypii (strain ATCC 10895 / CBS 109.51 / FGSC 9923 / NRRL Y-1056) (Yeast), this protein is Serine/threonine-protein kinase CLA4 (CLA4).